The chain runs to 481 residues: UDP-N-acetylmuramoylalanine--D-glutamate ligase (481 aa).

108 to 114 serves as a coordination point for ATP; the sequence is GTNGKTS.

It belongs to the MurCDEF family.

Its subcellular location is the cytoplasm. The enzyme catalyses UDP-N-acetyl-alpha-D-muramoyl-L-alanine + D-glutamate + ATP = UDP-N-acetyl-alpha-D-muramoyl-L-alanyl-D-glutamate + ADP + phosphate + H(+). The protein operates within cell wall biogenesis; peptidoglycan biosynthesis. Functionally, cell wall formation. Catalyzes the addition of glutamate to the nucleotide precursor UDP-N-acetylmuramoyl-L-alanine (UMA). The sequence is that of UDP-N-acetylmuramoylalanine--D-glutamate ligase from Bifidobacterium longum subsp. infantis (strain ATCC 15697 / DSM 20088 / JCM 1222 / NCTC 11817 / S12).